Reading from the N-terminus, the 390-residue chain is MLLTPKMFSSWLRQDVKKILKRKDSDAGERGKALEDLRASLFNRFRSPETPKRQQQQQHRICGPTVALTFNFVVAISIIFMNKWVLKNIGFEFPVFLTFIHYIVAYLLMALLKSFSLLPASPPSTKSSLLPLYTLGIVMSLSTGLANVSLKYNSVGFYQMAKIAVTPSIVFAEFLWYRKRVSFMKVVSLTVVSVGVAVATVTDLQFSLFGACVAFAWIIPSATNKILWSNMQQRENWTALALMWKTTPITLLFLVSMIPFLDPPGALSFNWSLTNTSAILVSALLGFFLQWSGALALGATSAITHVVLGQFKTCVLLLGNYYIFGSNSGFISVGGAFVAIMGTSLYTYLNTRGQSLKTSSSSSALSEKKSRFSDLKDDDKNLEPYGSEAV.

Transmembrane regions (helical) follow at residues 61–81 (ICGPTVALTFNFVVAISIIFM), 89–109 (IGFEFPVFLTFIHYIVAYLLM), 128–148 (SLLPLYTLGIVMSLSTGLANV), 155–175 (VGFYQMAKIAVTPSIVFAEFL), 182–201 (SFMKVVSLTVVSVGVAVATV), 206–228 (FSLFGACVAFAWIIPSATNKILW), 249–269 (ITLLFLVSMIPFLDPPGALSF), 278–298 (AILVSALLGFFLQWSGALALG), 306–326 (VVLGQFKTCVLLLGNYYIFGS), and 329–349 (GFISVGGAFVAIMGTSLYTYL). Low complexity predominate over residues 356-365 (LKTSSSSSAL). A disordered region spans residues 356-390 (LKTSSSSSALSEKKSRFSDLKDDDKNLEPYGSEAV). Residues 366 to 382 (SEKKSRFSDLKDDDKNL) show a composition bias toward basic and acidic residues.

Belongs to the TPT transporter family. TPT (TC 2.A.7.9) subfamily.

The protein resides in the membrane. This chain is Nucleotide-sugar uncharacterized transporter 1, found in Arabidopsis thaliana (Mouse-ear cress).